We begin with the raw amino-acid sequence, 120 residues long: Alanine racemase (120 aa).

The Proton acceptor; specific for L-alanine role is filled by Tyr-24.

Belongs to the alanine racemase family. As to quaternary structure, homodimer. It depends on pyridoxal 5'-phosphate as a cofactor.

It carries out the reaction L-alanine = D-alanine. In terms of biological role, highly specific to D- and L-alanine and does not catalyze the racemization of other amino acids. The protein is Alanine racemase of Penaeus monodon (Giant tiger prawn).